Consider the following 155-residue polypeptide: Small ribosomal subunit protein uS7 (155 aa).

This sequence belongs to the universal ribosomal protein uS7 family. In terms of assembly, part of the 30S ribosomal subunit. Contacts proteins S9 and S11.

In terms of biological role, one of the primary rRNA binding proteins, it binds directly to 16S rRNA where it nucleates assembly of the head domain of the 30S subunit. Is located at the subunit interface close to the decoding center, probably blocks exit of the E-site tRNA. The sequence is that of Small ribosomal subunit protein uS7 from Halorhodospira halophila (strain DSM 244 / SL1) (Ectothiorhodospira halophila (strain DSM 244 / SL1)).